Reading from the N-terminus, the 386-residue chain is Succinate--CoA ligase [ADP-forming] subunit beta (386 aa).

Residues 9–244 (KELLKQFGVP…LDEEDPAEIE (236 aa)) form the ATP-grasp domain. Residues Lys46, 53-55 (GRG), Glu99, Ala102, and Glu107 each bind ATP. Residues Asn199 and Asp213 each contribute to the Mg(2+) site. Substrate-binding positions include Asn264 and 321 to 323 (GIM).

The protein belongs to the succinate/malate CoA ligase beta subunit family. In terms of assembly, heterotetramer of two alpha and two beta subunits. Mg(2+) serves as cofactor.

It carries out the reaction succinate + ATP + CoA = succinyl-CoA + ADP + phosphate. It catalyses the reaction GTP + succinate + CoA = succinyl-CoA + GDP + phosphate. It functions in the pathway carbohydrate metabolism; tricarboxylic acid cycle; succinate from succinyl-CoA (ligase route): step 1/1. Succinyl-CoA synthetase functions in the citric acid cycle (TCA), coupling the hydrolysis of succinyl-CoA to the synthesis of either ATP or GTP and thus represents the only step of substrate-level phosphorylation in the TCA. The beta subunit provides nucleotide specificity of the enzyme and binds the substrate succinate, while the binding sites for coenzyme A and phosphate are found in the alpha subunit. This is Succinate--CoA ligase [ADP-forming] subunit beta from Bordetella petrii (strain ATCC BAA-461 / DSM 12804 / CCUG 43448).